The sequence spans 205 residues: MGPIRIGVGGPVGAGKTQLVERITRALIDEVSMAAITNDIYTIEDAKILAANGVLPEERIVGIETGGCPHTAIREDTSMNDAAIKDLVERFPDLELIFVESGGDNLSATFSPELVDFSIYIIDVAQGEKIPRKAGQGMIKSDLFIINKTDLAPYVGANLDVMVEDAKAFRKNKPFCLTNLRTDDGLDKVLEWIRHEVMMQDLQEA.

10-17 (GPVGAGKT) is a GTP binding site.

It belongs to the SIMIBI class G3E GTPase family. UreG subfamily. In terms of assembly, homodimer. UreD, UreF and UreG form a complex that acts as a GTP-hydrolysis-dependent molecular chaperone, activating the urease apoprotein by helping to assemble the nickel containing metallocenter of UreC. The UreE protein probably delivers the nickel.

Its subcellular location is the cytoplasm. Facilitates the functional incorporation of the urease nickel metallocenter. This process requires GTP hydrolysis, probably effectuated by UreG. In Corynebacterium glutamicum (strain ATCC 13032 / DSM 20300 / JCM 1318 / BCRC 11384 / CCUG 27702 / LMG 3730 / NBRC 12168 / NCIMB 10025 / NRRL B-2784 / 534), this protein is Urease accessory protein UreG.